Reading from the N-terminus, the 154-residue chain is MTHYEGDLRPTTARFAIIASRWNARITDVLVAGARQSLAGNGIGEDAIDVIRVPGAWEIPIAANRVAQSGQHGAIIALGCVIRGDTRHYEHVADLCAEGLMSVQLQTGVPVLNGVLAVERVEDAEARAGGSHGNKGEECALAALELVNLMELLP.

5-amino-6-(D-ribitylamino)uracil contacts are provided by residues Trp22, 56 to 58 (AWE), and 80 to 82 (CVI). 85–86 (DT) is a binding site for (2S)-2-hydroxy-3-oxobutyl phosphate. Residue His88 is the Proton donor of the active site. Asn113 is a binding site for 5-amino-6-(D-ribitylamino)uracil. Arg127 contributes to the (2S)-2-hydroxy-3-oxobutyl phosphate binding site.

This sequence belongs to the DMRL synthase family. Forms an icosahedral capsid composed of 60 subunits, arranged as a dodecamer of pentamers.

The enzyme catalyses (2S)-2-hydroxy-3-oxobutyl phosphate + 5-amino-6-(D-ribitylamino)uracil = 6,7-dimethyl-8-(1-D-ribityl)lumazine + phosphate + 2 H2O + H(+). It functions in the pathway cofactor biosynthesis; riboflavin biosynthesis; riboflavin from 2-hydroxy-3-oxobutyl phosphate and 5-amino-6-(D-ribitylamino)uracil: step 1/2. In terms of biological role, catalyzes the formation of 6,7-dimethyl-8-ribityllumazine by condensation of 5-amino-6-(D-ribitylamino)uracil with 3,4-dihydroxy-2-butanone 4-phosphate. This is the penultimate step in the biosynthesis of riboflavin. The sequence is that of 6,7-dimethyl-8-ribityllumazine synthase from Xanthomonas axonopodis pv. citri (strain 306).